A 347-amino-acid polypeptide reads, in one-letter code: MNISMGISSLSVINGSALPRHNWAREEAQALYDLPFPDLVFQAQSIHRTSFDPNHVETASLLSIKTGGCAEDCGYCSQSAHYKTDVKATKLMAHDDVVATARRAKESGAGRFCMAAAWRNPKEKDLERICHMVSAVKELGMETCATLGMLTREQADKLRAAGLDFYNHNVDTSPEFYGKIITTRTLQDRIETLAHARESGLKVCCGGIVGLGEQVEDRLGMLVLLANLAEHPESVPINQWNEVKGVPVNATAEAPDPIAFVRMIAVARIMMPKSVVRLSAGRQYMSDEMQALCMLAGANSIFIGDVLLTTKNPQTTKDAALLERLGMTSRFDEVATDKANPVSSRAI.

Residues 54 to 273 (NHVETASLLS…IAVARIMMPK (220 aa)) form the Radical SAM core domain. [4Fe-4S] cluster is bound by residues Cys-69, Cys-73, and Cys-76. Positions 113, 144, 204, and 277 each coordinate [2Fe-2S] cluster.

It belongs to the radical SAM superfamily. Biotin synthase family. Homodimer. It depends on [4Fe-4S] cluster as a cofactor. [2Fe-2S] cluster is required as a cofactor.

It carries out the reaction (4R,5S)-dethiobiotin + (sulfur carrier)-SH + 2 reduced [2Fe-2S]-[ferredoxin] + 2 S-adenosyl-L-methionine = (sulfur carrier)-H + biotin + 2 5'-deoxyadenosine + 2 L-methionine + 2 oxidized [2Fe-2S]-[ferredoxin]. The protein operates within cofactor biosynthesis; biotin biosynthesis; biotin from 7,8-diaminononanoate: step 2/2. In terms of biological role, catalyzes the conversion of dethiobiotin (DTB) to biotin by the insertion of a sulfur atom into dethiobiotin via a radical-based mechanism. The sequence is that of Biotin synthase from Afipia carboxidovorans (strain ATCC 49405 / DSM 1227 / KCTC 32145 / OM5) (Oligotropha carboxidovorans).